The primary structure comprises 257 residues: Snake venom serine protease KN11 (257 aa).

Positions 1 to 18 are cleaved as a signal peptide; it reads MVLIRVLANLLILQLSYA. A propeptide spanning residues 19-24 is cleaved from the precursor; sequence QKSSEL. Positions 25–248 constitute a Peptidase S1 domain; it reads VTGGHPCNIN…HLDWIKSIIA (224 aa). 6 cysteine pairs are disulfide-bonded: cysteine 31–cysteine 162, cysteine 49–cysteine 65, cysteine 97–cysteine 255, cysteine 141–cysteine 209, cysteine 173–cysteine 188, and cysteine 199–cysteine 224. Active-site charge relay system residues include histidine 64 and aspartate 109. Asparagine 120 and asparagine 121 each carry an N-linked (GlcNAc...) asparagine glycan. The active-site Charge relay system is the serine 203.

It belongs to the peptidase S1 family. Snake venom subfamily. As to quaternary structure, monomer. In terms of tissue distribution, expressed by the venom gland.

It is found in the secreted. In terms of biological role, snake venom serine protease that may act in the hemostasis system of the prey. This Trimeresurus stejnegeri (Chinese green tree viper) protein is Snake venom serine protease KN11.